The primary structure comprises 158 residues: UPF0725 protein At3g57210 (158 aa).

Belongs to the UPF0725 (EMB2204) family.

This chain is UPF0725 protein At3g57210, found in Arabidopsis thaliana (Mouse-ear cress).